The sequence spans 381 residues: MSNPSPQAPEEEASTSVCRPQSSMASVSRRHRRERRFRRYLSAGRLVRAQALLQRHPGLDVDAGQPPPLHRACARHDAPALCLLLRLGADPAHQDRHGDTALHAAARQGPNAYTDFFLPLLSRCPSAMGIKNKDGETPGQILGWGPPWDSAEEEEDEEVSKEREWRQKLQGELEDEWQEVIGRFEDDASRETQEPESFSAWSERLAREHAQKQRRQQLEAEGSRRPPRAEGSSHSWRQQEEEQRLFRERARVKEKELCESRARRAQEAQGDRGPAPPRARPRAEHPRGAGRGSLWRFGDVPWPCPGGGDPEAMAAALVARGPPLEEQGALKRYLRVQQVRWHPDRFLQRFRNQIETWELGRVMGAVTALSQALNRHAEALK.

The tract at residues 1 to 32 (MSNPSPQAPEEEASTSVCRPQSSMASVSRRHR) is disordered. The segment covering 14 to 26 (STSVCRPQSSMAS) has biased composition (polar residues). 2 ANK repeats span residues 64–93 (GQPP…DPAH) and 97–133 (HGDT…IKNK). Disordered regions lie at residues 129-166 (GIKN…REWR), 186-242 (DDAS…QEEE), and 257-294 (LCES…RGSL). Ser150 bears the Phosphoserine mark. Positions 150 to 159 (SAEEEEDEEV) are enriched in acidic residues. Basic and acidic residues-rich tracts occupy residues 204–228 (RLAR…RPPR) and 257–270 (LCES…EAQG).

Interacts with CACTIN (via N-terminal domain); the interaction occurs in a pro-inflammatory-independent manner.

The protein localises to the nucleus. Its function is as follows. Involved in the regulation of innate immune response. Acts as negative regulator of Toll-like receptor and interferon-regulatory factor (IRF) signaling pathways. Contributes to the negative regulation of transcriptional activation of NF-kappa-B target genes in response to endogenous pro-inflammatory stimuli. The chain is NF-kappa-B inhibitor-like protein 1 (Nfkbil1) from Rattus norvegicus (Rat).